The sequence spans 291 residues: uncharacterized protein (291 aa).

Belongs to the pseudouridine synthase RluA family.

The catalysed reaction is a uridine in RNA = a pseudouridine in RNA. This is an uncharacterized protein from Synechocystis sp. (strain ATCC 27184 / PCC 6803 / Kazusa).